We begin with the raw amino-acid sequence, 305 residues long: Fatty acid elongase 1 (305 aa).

The next 7 membrane-spanning stretches (helical) occupy residues 24 to 44 (MIANVDVVLYISFLYLGFVFI), 80 to 100 (VVWNLALSIFSIFGTSTVTPV), 129 to 149 (FWMGIFALSKIPELVDTIFLV), 158 to 178 (FLHWYHHVTVLLFSWHTYCVG), 183 to 203 (IWVAAMNYSVHSVMYLYFALA), 217 to 237 (YITIIQILQMVVGCYVTIFAL), and 257 to 277 (IQLVMYASYLYLFSKMFVASY). The HxxHH motif motif lies at 160–164 (HWYHH). Catalysis depends on His-163, which acts as the Nucleophile. The interval 284-305 (PTVGGPSSTAGVSNGSVEKKVK) is disordered. Over residues 288–299 (GPSSTAGVSNGS) the composition is skewed to polar residues. N-linked (GlcNAc...) asparagine glycosylation occurs at Asn-297.

Belongs to the ELO family.

The protein localises to the endoplasmic reticulum membrane. The catalysed reaction is an acyl-CoA + malonyl-CoA + H(+) = a 3-oxoacyl-CoA + CO2 + CoA. It participates in lipid metabolism; fatty acid biosynthesis. Involved in the synthesis of fatty acids. Elongates C4 fatty acids to C10. The polypeptide is Fatty acid elongase 1 (Trypanosoma brucei brucei (strain 927/4 GUTat10.1)).